The sequence spans 311 residues: Phosphoglycerate mutase 2 (311 aa).

Substrate-binding positions include 16 to 23 (RHGQSELN), 29 to 30 (CG), Arg-73, 126 to 129 (ERHY), Lys-137, 153 to 154 (RR), and 243 to 244 (GS). The active-site Tele-phosphohistidine intermediate is the His-17. The active-site Proton donor/acceptor is Glu-126.

Belongs to the phosphoglycerate mutase family. BPG-dependent PGAM subfamily.

Its subcellular location is the cytoplasm. It carries out the reaction (2R)-2-phosphoglycerate = (2R)-3-phosphoglycerate. It participates in carbohydrate degradation; glycolysis; pyruvate from D-glyceraldehyde 3-phosphate: step 3/5. Could be non-functional. The polypeptide is Phosphoglycerate mutase 2 (GPM2) (Saccharomyces cerevisiae (strain ATCC 204508 / S288c) (Baker's yeast)).